Consider the following 300-residue polypeptide: GTPase Era (300 aa).

In terms of domain architecture, Era-type G spans 7 to 175; sequence KSGFAVMAGL…KTAVAETLPF (169 aa). The G1 stretch occupies residues 15–22; that stretch reads GLPNAGKS. 15–22 provides a ligand contact to GTP; that stretch reads GLPNAGKS. The segment at 41 to 45 is G2; the sequence is QMTRQ. Residues 62–65 form a G3 region; that stretch reads DTPG. Residues 62-66 and 124-127 each bind GTP; these read DTPGF and NKAD. The interval 124–127 is G4; it reads NKAD. The tract at residues 154-156 is G5; it reads ISA. The KH type-2 domain maps to 198–283; it reads IREQIFNLYE…RLELEVSVEP (86 aa).

It belongs to the TRAFAC class TrmE-Era-EngA-EngB-Septin-like GTPase superfamily. Era GTPase family. In terms of assembly, monomer.

It is found in the cytoplasm. Its subcellular location is the cell inner membrane. Its function is as follows. An essential GTPase that binds both GDP and GTP, with rapid nucleotide exchange. Plays a role in 16S rRNA processing and 30S ribosomal subunit biogenesis and possibly also in cell cycle regulation and energy metabolism. This is GTPase Era from Elusimicrobium minutum (strain Pei191).